The following is a 448-amino-acid chain: DEAD-box ATP-dependent RNA helicase CshB (448 aa).

Residues 4-32 (HPFEQFNLESSLIDAVKDLNFEKPTEIQN) carry the Q motif motif. In terms of domain architecture, Helicase ATP-binding spans 35-206 (IPRILKRTNL…NKYLSHPEYV (172 aa)). Position 48-55 (48-55 (SQTGTGKS)) interacts with ATP. Residues 154-157 (DEAD) carry the DEAD box motif. Positions 236–386 (NLIDILNPYL…EVKAHNQRQA (151 aa)) constitute a Helicase C-terminal domain. A compositionally biased stretch (basic residues) spans 400–418 (NKVRSKIKNKVKPGYKKKF). The tract at residues 400–448 (NKVRSKIKNKVKPGYKKKFKQEVEKMKRQERKQFSKQQNRQKRKQNKKG) is disordered. A compositionally biased stretch (basic and acidic residues) spans 419–432 (KQEVEKMKRQERKQ). The span at 438–448 (NRQKRKQNKKG) shows a compositional bias: basic residues.

This sequence belongs to the DEAD box helicase family. CshB subfamily.

The protein resides in the cytoplasm. The enzyme catalyses ATP + H2O = ADP + phosphate + H(+). Functionally, probable DEAD-box RNA helicase. May work in conjunction with the cold shock proteins to ensure proper initiation of transcription at low and optimal temperatures. This chain is DEAD-box ATP-dependent RNA helicase CshB, found in Staphylococcus aureus (strain NCTC 8325 / PS 47).